The chain runs to 221 residues: ATP-dependent Clp protease proteolytic subunit 1, mitochondrial (221 aa).

The transit peptide at 1–25 (MLRRLVTSSLSASRSMSASVQSRVG) directs the protein to the mitochondrion. The active-site Nucleophile is the Ser-120. His-145 is a catalytic residue.

Belongs to the peptidase S14 family. As to quaternary structure, tetradecamer that assembles into a two heptameric rings with a central cavity. As to expression, expressed in the intestine.

Its subcellular location is the mitochondrion matrix. It catalyses the reaction Hydrolysis of proteins to small peptides in the presence of ATP and magnesium. alpha-casein is the usual test substrate. In the absence of ATP, only oligopeptides shorter than five residues are hydrolyzed (such as succinyl-Leu-Tyr-|-NHMec, and Leu-Tyr-Leu-|-Tyr-Trp, in which cleavage of the -Tyr-|-Leu- and -Tyr-|-Trp bonds also occurs).. Functionally, clp cleaves peptides in various proteins in a process that requires ATP hydrolysis. Clp may be responsible for a fairly general and central housekeeping function rather than for the degradation of specific substrates. In Caenorhabditis elegans, this protein is ATP-dependent Clp protease proteolytic subunit 1, mitochondrial (clpp-1).